The sequence spans 299 residues: NAD-dependent protein deacetylase 1 (299 aa).

In terms of domain architecture, Deacetylase sirtuin-type spans 15–292; the sequence is LPPGTTDLAP…TTVADRLGLR (278 aa). Residues 39 to 59 and 117 to 120 each bind NAD(+); these read GAGI…GSLS and QNVD. Residue His-135 is the Proton acceptor of the active site. Zn(2+)-binding residues include Cys-143, Cys-146, Cys-194, and Cys-197. NAD(+) contacts are provided by residues 234 to 236 and Leu-278; that span reads GSS.

Belongs to the sirtuin family. Class II subfamily. Zn(2+) is required as a cofactor.

It localises to the cytoplasm. The catalysed reaction is N(6)-acetyl-L-lysyl-[protein] + NAD(+) + H2O = 2''-O-acetyl-ADP-D-ribose + nicotinamide + L-lysyl-[protein]. In terms of biological role, NAD-dependent protein deacetylase which modulates the activities of several enzymes which are inactive in their acetylated form. This Streptomyces coelicolor (strain ATCC BAA-471 / A3(2) / M145) protein is NAD-dependent protein deacetylase 1.